An 80-amino-acid polypeptide reads, in one-letter code: Defensin-like protein 204 (80 aa).

The N-terminal stretch at 1-29 (MAKTFSSICFTTLLLVVLFISTEIPKSEA) is a signal peptide. Intrachain disulfides connect Cys43-Cys64, Cys48-Cys73, and Cys52-Cys75.

It belongs to the DEFL family.

Its subcellular location is the secreted. The sequence is that of Defensin-like protein 204 from Arabidopsis thaliana (Mouse-ear cress).